The primary structure comprises 599 residues: Putative sensor histidine kinase NtrY-like (599 aa).

The next 4 membrane-spanning stretches (helical) occupy residues 17–37, 44–64, 85–105, and 285–305; these read VLIFTLATAAIIFACATFYVI, FSTIIGFLLVDLAIFLILGVV, IVIAFSLVAAIPTIIVSVFSV, and IMFIFIALLLLFVAISFGVIF. The 55-residue stretch at 307–361 folds into the HAMP domain; it reads AKIVKPIKKLVTATDNVKDGDLTVQVPENEVDKDEIGTLYVAFNRMIKQLSRQQR. In terms of domain architecture, Histidine kinase spans 378-589; it reads KVAHEIKNPL…IIDIKFDLKE (212 aa). Residue His-381 is modified to Phosphohistidine; by autocatalysis.

The protein localises to the cell membrane. The catalysed reaction is ATP + protein L-histidine = ADP + protein N-phospho-L-histidine.. Member of the two-component regulatory system RC0948/RC0849. In Rickettsia conorii (strain ATCC VR-613 / Malish 7), this protein is Putative sensor histidine kinase NtrY-like.